Here is a 137-residue protein sequence, read N- to C-terminus: Profilin-3 (137 aa).

It belongs to the profilin family. As to quaternary structure, interacts with ACTRT3.

Its subcellular location is the cytoplasm. The protein resides in the cytoskeleton. It localises to the nucleus. In terms of biological role, binds to actin and affects the structure of the cytoskeleton. Binds to poly-L-proline, phosphatidylinositol 3-phosphate (PtdIns(3)P), phosphatidylinositol 4,5-bisphosphate (PtdIns(4,5)P2) and phosphatidylinositol 4-phosphate (PtdIns(4)P). Slightly reduces actin polymerization. May be involved in spermatogenesis. The protein is Profilin-3 (PFN3) of Bos taurus (Bovine).